A 395-amino-acid chain; its full sequence is L-rhamnonate dehydratase (395 aa).

2 residues coordinate substrate: H23 and R49. The Mg(2+) site is built by D215, E241, and E269. H319 functions as the Proton acceptor in the catalytic mechanism. E339 serves as a coordination point for substrate.

The protein belongs to the mandelate racemase/muconate lactonizing enzyme family. RhamD subfamily. As to quaternary structure, homooctamer; tetramer of dimers. It depends on Mg(2+) as a cofactor.

The enzyme catalyses L-rhamnonate = 2-dehydro-3-deoxy-L-rhamnonate + H2O. Catalyzes the dehydration of L-rhamnonate to 2-keto-3-deoxy-L-rhamnonate (KDR). This is L-rhamnonate dehydratase (rhmD) from Polaromonas sp. (strain JS666 / ATCC BAA-500).